The following is a 512-amino-acid chain: Polyamine oxidase 1 (512 aa).

E38 and R46 together coordinate FAD. Residues 448–470 are disordered; it reads DRMAEPLPRGPDAAADERPPSPR. E476 provides a ligand contact to FAD.

Belongs to the flavin monoamine oxidase family. FAD serves as cofactor.

Its subcellular location is the cytoplasm. The enzyme catalyses spermine + O2 + H2O = 3-aminopropanal + spermidine + H2O2. It carries out the reaction N(1)-acetylspermine + O2 + H2O = 3-acetamidopropanal + spermidine + H2O2. The catalysed reaction is norspermine + O2 + H2O = norspermidine + 3-aminopropanal + H2O2. It catalyses the reaction thermospermine + O2 + H2O = 3-aminopropanal + spermidine + H2O2. Its pathway is amine and polyamine degradation; spermine degradation. In terms of biological role, flavoenzyme involved in polyamine back-conversion. Catalyzes the oxidation of the secondary amino group of polyamines, such as spermine and its acetyl derivatives. Substrate preference is thermospermine &gt; spermine &gt; norspermine &gt; N(1)-acetylspermine. No activity detected when putrescine or spermidine are used as substrates. Plays an important role in the regulation of polyamine intracellular concentration. In Oryza sativa subsp. japonica (Rice), this protein is Polyamine oxidase 1.